A 205-amino-acid chain; its full sequence is Urease accessory protein UreG (205 aa).

14–21 (GPVGSGKT) contacts GTP.

As to quaternary structure, homodimer. UreD, UreF and UreG form a complex that acts as a GTP-hydrolysis-dependent molecular chaperone, activating the urease apoprotein by helping to assemble the nickel containing metallocenter of UreC. The UreE protein probably delivers the nickel.

It is found in the cytoplasm. With respect to regulation, activation of apourease within the UreDFG-apoprotein complex is inhibited by zinc, copper and cobalt. Its function is as follows. Facilitates the functional incorporation of the urease nickel metallocenter. This process requires GTP hydrolysis, probably effectuated by UreG. The sequence is that of Urease accessory protein UreG from Klebsiella aerogenes (Enterobacter aerogenes).